A 197-amino-acid chain; its full sequence is NADH-quinone oxidoreductase subunit C (197 aa).

This sequence belongs to the complex I 30 kDa subunit family. NDH-1 is composed of 14 different subunits. Subunits NuoB, C, D, E, F, and G constitute the peripheral sector of the complex.

The protein resides in the cell inner membrane. It catalyses the reaction a quinone + NADH + 5 H(+)(in) = a quinol + NAD(+) + 4 H(+)(out). NDH-1 shuttles electrons from NADH, via FMN and iron-sulfur (Fe-S) centers, to quinones in the respiratory chain. The immediate electron acceptor for the enzyme in this species is believed to be ubiquinone. Couples the redox reaction to proton translocation (for every two electrons transferred, four hydrogen ions are translocated across the cytoplasmic membrane), and thus conserves the redox energy in a proton gradient. This is NADH-quinone oxidoreductase subunit C from Rickettsia prowazekii (strain Madrid E).